Here is a 70-residue protein sequence, read N- to C-terminus: Large ribosomal subunit protein eL24 (70 aa).

Residues Cys-7, Cys-10, Cys-33, and Cys-37 each contribute to the Zn(2+) site. Residues 7 to 37 (CSFCGYEIEPGKGKMVVEKDGTVLYFCSSKC) form a C4-type zinc finger.

Belongs to the eukaryotic ribosomal protein eL24 family. As to quaternary structure, part of the 50S ribosomal subunit. Forms a cluster with proteins L3 and L14. The cofactor is Zn(2+).

Functionally, binds to the 23S rRNA. This Methanocaldococcus jannaschii (strain ATCC 43067 / DSM 2661 / JAL-1 / JCM 10045 / NBRC 100440) (Methanococcus jannaschii) protein is Large ribosomal subunit protein eL24.